The primary structure comprises 119 residues: uncharacterized protein (119 aa).

Residues 80–104 (VFPLVYLFCVVFQFLSLGCYLSIFF) form a helical membrane-spanning segment.

The protein localises to the membrane. This is an uncharacterized protein from Saccharomyces cerevisiae (strain ATCC 204508 / S288c) (Baker's yeast).